The sequence spans 95 residues: Protein TusB (95 aa).

The protein belongs to the DsrH/TusB family. In terms of assembly, heterohexamer, formed by a dimer of trimers. The hexameric TusBCD complex contains 2 copies each of TusB, TusC and TusD. The TusBCD complex interacts with TusE.

The protein resides in the cytoplasm. In terms of biological role, part of a sulfur-relay system required for 2-thiolation of 5-methylaminomethyl-2-thiouridine (mnm(5)s(2)U) at tRNA wobble positions. In Shigella sonnei (strain Ss046), this protein is Protein TusB.